The sequence spans 476 residues: Surface membrane glycoprotein GP46/M-2 (476 aa).

An N-terminal signal peptide occupies residues 1-32 (MAQCVRRLVLAAPLAAVVALLLCTSSAPVARA). 4 consecutive repeat copies span residues 107-130 (VMILALDFGAMGQGLSGTLPPSWS), 131-154 (SMKHLIVLDLEGTKVSGTLPPEWS), 155-178 (EMTSAEALQLENCGLSGSLPTSWS), and 179-202 (SMPKLRIVSLSGNHFCGCVPDSWR). The segment at 107-202 (VMILALDFGA…FCGCVPDSWR (96 aa)) is 4 X 24 AA tandem repeats. Disordered stretches follow at residues 231 to 255 (APGTTTTNPPTTTGTPAASSTPSPG) and 348 to 370 (ALSPPPADGETDSHTRTRTRRRA). Residue Cys452 is the site of GPI-anchor amidated cysteine attachment. Positions 453–476 (PALFDGARLRCCALVVCAGAAPAG) are cleaved as a propeptide — removed in mature form.

It localises to the cell membrane. The polypeptide is Surface membrane glycoprotein GP46/M-2 (Leishmania amazonensis).